The primary structure comprises 29 residues: Glucagon (29 aa).

It belongs to the glucagon family.

The protein localises to the secreted. Functionally, glucagon plays a key role in glucose metabolism and homeostasis. Regulates blood glucose by increasing gluconeogenesis and decreasing glycolysis. The sequence is that of Glucagon (GCG) from Struthio camelus (Common ostrich).